The primary structure comprises 572 residues: Sulfate adenylyltransferase (572 aa).

Residues 1–169 form an N-terminal region; sequence MANAPHGGVL…IEAVNKLNHY (169 aa). Residues 170–393 form a catalytic region; sequence DYVALRYTPA…LRESNPPRAT (224 aa). Q197 is a binding site for sulfate. Residues 197–200 and 291–294 each bind ATP; these read QTRN and GRDH. Catalysis depends on residues T198, R199, and N200. R199 is a sulfate binding site. A sulfate-binding site is contributed by A295. V333 is a binding site for ATP. An allosteric regulation domain; adenylyl-sulfate kinase-like region spans residues 394-572; the sequence is QGFTIFLTGY…LESQGFLERQ (179 aa). 3'-phosphoadenylyl sulfate-binding positions include 433-436, R450, 476-477, and R514; these read DTVR and IA.

In the N-terminal section; belongs to the sulfate adenylyltransferase family. This sequence in the C-terminal section; belongs to the APS kinase family. As to quaternary structure, homohexamer. Dimer of trimers.

Its subcellular location is the cytoplasm. It carries out the reaction sulfate + ATP + H(+) = adenosine 5'-phosphosulfate + diphosphate. It functions in the pathway sulfur metabolism; hydrogen sulfide biosynthesis; sulfite from sulfate: step 1/3. Its activity is regulated as follows. Allosterically inhibited by 3'-phosphoadenosine 5'-phosphosulfate (PAPS). Catalyzes the first intracellular reaction of sulfate assimilation, forming adenosine-5'-phosphosulfate (APS) from inorganic sulfate and ATP. Plays an important role in sulfate activation as a component of the biosynthesis pathway of sulfur-containing amino acids. This chain is Sulfate adenylyltransferase, found in Penicillium chrysogenum (Penicillium notatum).